The following is a 98-amino-acid chain: snRNA-activating protein complex subunit 5 (98 aa).

The segment covering 73-82 has biased composition (polar residues); sequence QTTLELSTKS. Residues 73–98 form a disordered region; the sequence is QTTLELSTKSHVTEEEEEEEEEESDS. Residue Thr-85 is modified to Phosphothreonine. Acidic residues predominate over residues 86–98; the sequence is EEEEEEEEEESDS.

As to quaternary structure, part of the SNAPc complex composed of 5 subunits: SNAPC1, SNAPC2, SNAPC3, SNAPC4 and SNAPC5. SNAPC5 interacts with SNAPC4.

It is found in the nucleus. Part of the SNAPc complex required for the transcription of both RNA polymerase II and III small-nuclear RNA genes. Binds to the proximal sequence element (PSE), a non-TATA-box basal promoter element common to these 2 types of genes. Recruits TBP and BRF2 to the U6 snRNA TATA box. This is snRNA-activating protein complex subunit 5 (SNAPC5) from Homo sapiens (Human).